Consider the following 197-residue polypeptide: ATP-dependent Clp protease proteolytic subunit (197 aa).

S98 functions as the Nucleophile in the catalytic mechanism. Residue H123 is part of the active site.

This sequence belongs to the peptidase S14 family. Fourteen ClpP subunits assemble into 2 heptameric rings which stack back to back to give a disk-like structure with a central cavity, resembling the structure of eukaryotic proteasomes.

The protein resides in the cytoplasm. It carries out the reaction Hydrolysis of proteins to small peptides in the presence of ATP and magnesium. alpha-casein is the usual test substrate. In the absence of ATP, only oligopeptides shorter than five residues are hydrolyzed (such as succinyl-Leu-Tyr-|-NHMec, and Leu-Tyr-Leu-|-Tyr-Trp, in which cleavage of the -Tyr-|-Leu- and -Tyr-|-Trp bonds also occurs).. Functionally, cleaves peptides in various proteins in a process that requires ATP hydrolysis. Has a chymotrypsin-like activity. Plays a major role in the degradation of misfolded proteins. In Haemophilus ducreyi (strain 35000HP / ATCC 700724), this protein is ATP-dependent Clp protease proteolytic subunit.